The chain runs to 621 residues: F-box/LRR-repeat protein 4 (621 aa).

Arginine 28 is modified (asymmetric dimethylarginine). In terms of domain architecture, F-box spans 277-332 (NGYFDKLPYELIQLILNHLSLPDLCRLAQTCRLLHQHCCDPLQYIHLNLQPYWARL). LRR repeat units follow at residues 376–397 (ELVR…EVIS), 402–421 (NLQD…AFGH), 427–448 (SLKR…SILN), 452–474 (ELQH…ASMI), 480–501 (NLRT…AELA), 504–524 (CVLL…STGC), 532–558 (LPNL…ASNC), 559–583 (TRLQ…LLES), and 584–609 (CKDL…LNAS).

In terms of assembly, part of a SCF (SKP1-CUL1-F-box) protein ligase complex. Interacts with FAF2 and VCP. Interacts with PPTC7; this interaction promotes destruction of BNIP3 and NIX and mitophagy suppression.

Its subcellular location is the cytoplasm. The protein localises to the nucleus. The protein resides in the mitochondrion outer membrane. Substrate-recognition component of the mitochondria-localized SCF-FBXL4 ubiquitin E3 ligase complex that plays a role in the restriction of mitophagy by controlling the degradation of BNIP3 and NIX mitophagy receptors. Also rescues mitochondrial injury through reverting hyperactivation of DRP1-mediated mitochondrial fission. This is F-box/LRR-repeat protein 4 (Fbxl4) from Mus musculus (Mouse).